A 406-amino-acid chain; its full sequence is Beta-galactoside alpha-2,6-sialyltransferase 1 (406 aa).

Residues 1 to 9 (MIHTNLKKK) are Cytoplasmic-facing. A helical; Signal-anchor for type II membrane protein membrane pass occupies residues 10–26 (FSCCVLVFLLFAVICVW). Residues 27 to 406 (KEKKKGSYYD…TLPGFRTIHC (380 aa)) are Lumenal-facing. 3 disulfides stabilise this stretch: Cys142–Cys406, Cys184–Cys335, and Cys353–Cys364. N-linked (GlcNAc...) asparagine glycans are attached at residues Asn149 and Asn161. Substrate contacts are provided by residues Ser189, Asn212, Asn233, 322 to 324 (SSG), Cys353, Tyr354, Thr365, Tyr369, His370, and Lys376. Tyr369 bears the Phosphotyrosine mark.

This sequence belongs to the glycosyltransferase 29 family. As to quaternary structure, monomer and homodimer. N-glycosylated.

It localises to the golgi apparatus. The protein resides in the golgi stack membrane. Its subcellular location is the secreted. It catalyses the reaction a beta-D-galactoside + CMP-N-acetyl-beta-neuraminate = an N-acetyl-alpha-neuraminyl-(2-&gt;6)-beta-D-galactosyl derivative + CMP + H(+). It functions in the pathway protein modification; protein glycosylation. Inhibited by CTP. Its function is as follows. Transfers sialic acid from CMP-sialic acid to galactose-containing acceptor substrates. In B lymphocytes, generates neuraminidase-sensitive lymphocyte cell-surface differentiation antigens, such as CDw75, HB-6 and CD76. This Homo sapiens (Human) protein is Beta-galactoside alpha-2,6-sialyltransferase 1 (ST6GAL1).